The primary structure comprises 127 residues: Protein FAM229A (127 aa).

Residues 1–96 form a disordered region; sequence MLPSSTPGPG…ATEHNPVRPL (96 aa). Residues 24-39 show a composition bias toward low complexity; sequence RSPAARAPAAASSLGP.

It belongs to the FAM229 family.

The protein is Protein FAM229A (FAM229A) of Homo sapiens (Human).